The following is a 90-amino-acid chain: UPF0237 protein BL1209.1 (90 aa).

In terms of domain architecture, ACT spans 5–79 (IITVVGQDTV…DDIGVRIRCQ (75 aa)).

It belongs to the UPF0237 family.

In Bifidobacterium longum (strain NCC 2705), this protein is UPF0237 protein BL1209.1.